The primary structure comprises 602 residues: Na(+)/dicarboxylate cotransporter 3 (602 aa).

Topologically, residues 1 to 16 (MAALAAAAKKVWSARR) are cytoplasmic. Residues 17-37 (LLVLLFTPLALLPVVFALPPK) form a helical membrane-spanning segment. The Extracellular segment spans residues 38–55 (EGRCLFVILLMAVYWCTE). The helical transmembrane segment at 56–76 (ALPLSVTALLPIVLFPFMGIL) threads the bilayer. The Cytoplasmic portion of the chain corresponds to 77–82 (PSNKVC). A helical transmembrane segment spans residues 83–103 (PQYFLDTNFLFLSGLIMASAI). Topologically, residues 104–137 (EEWNLHRRIALKILMLVGVQPARLILGMMVTTSF) are extracellular. Residues 138–158 (LSMWLSNTASTAMMLPIANAI) traverse the membrane as a helical segment. Residues 159–229 (LKSLFGQKEV…SRKEDEYRRN (71 aa)) are Cytoplasmic-facing. A helical transmembrane segment spans residues 230-250 (IWKGFLISIPYSASIGGTATL). Over 251-278 (TGTAPNLILLGQLKSFFPQCDVVNFGSW) the chain is Extracellular. Residues 279 to 299 (FIFAFPLMLLFLLAGWLWISF) traverse the membrane as a helical segment. At 300–336 (LYGGLSFRGWRKNKSEIRTNAEDRARAVIREEYQNLG) the chain is on the cytoplasmic side. Residues 337 to 357 (PIKFAEQAVFILFCMFAILLF) form a helical membrane-spanning segment. Topologically, residues 358 to 372 (TRDPKFIPGWASLFN) are extracellular. A helical transmembrane segment spans residues 373 to 393 (PGFLSDAVTGVAIVTILFFFP). The Cytoplasmic segment spans residues 394–422 (SQRPSLKWWFDFKAPNTETEPLLTWKKAQ). The helical intramembrane region spans 423–443 (ETVPWNIILLLGGGFAMAKGC). The Cytoplasmic portion of the chain corresponds to 444–461 (EESGLSVWIGGQLHPLEN). The helical transmembrane segment at 462–482 (VPPALAVLLITVVIAFFTEFA) threads the bilayer. Topologically, residues 483-505 (SNTATIIIFLPVLAELAIRLRVH) are extracellular. A helical transmembrane segment spans residues 506–526 (PLYLMIPGTVGCSFAFMLPVS). At 527 to 546 (TPPNSIAFASGHLLVKDMVR) the chain is on the cytoplasmic side. Residues 547–567 (TGLLMNLMGVLLLSLAMNTWA) form a helical membrane-spanning segment. The Extracellular segment spans residues 568–602 (QTIFQLGTFPDWADMYSVNVTALPPTLANDTFRTL). Asparagine 586 and asparagine 596 each carry an N-linked (GlcNAc...) asparagine glycan.

It belongs to the SLC13A/DASS transporter (TC 2.A.47) family. NADC subfamily. In terms of tissue distribution, expression is highest in kidney. Detected in placenta, brain, liver and pancreas.

The protein localises to the cell membrane. It carries out the reaction succinate(out) + 3 Na(+)(out) = succinate(in) + 3 Na(+)(in). It catalyses the reaction 2-oxoglutarate(out) + 3 Na(+)(out) = 2-oxoglutarate(in) + 3 Na(+)(in). The enzyme catalyses N-acetyl-L-aspartate(out) + 3 Na(+)(out) = N-acetyl-L-aspartate(in) + 3 Na(+)(in). The catalysed reaction is glutarate(out) + 3 Na(+)(out) = glutarate(in) + 3 Na(+)(in). It carries out the reaction fumarate(out) + 3 Na(+)(out) = fumarate(in) + 3 Na(+)(in). It catalyses the reaction malate(out) + 3 Na(+)(out) = malate(in) + 3 Na(+)(in). The enzyme catalyses 2,2-dimethylsuccinate(out) + 3 Na(+)(out) = 2,2-dimethylsuccinate(in) + 3 Na(+)(in). The catalysed reaction is 2,3-dimethylsuccinate(out) + 3 Na(+)(out) = 2,3-dimethylsuccinate(in) + 3 Na(+)(in). It carries out the reaction itaconate(out) + 3 Na(+)(out) = itaconate(in) + 3 Na(+)(in). Its activity is regulated as follows. Li(+) decreases succinate transport in the presence of Na(+). Functionally, high-affinity sodium-dicarboxylate cotransporter that accepts a range of substrates with 4-6 carbon atoms, such as the citric acid cycle intermediates succinate and alpha-ketoglutarate (2-oxoglutarate), as well as other compounds including N-acetyl-L-aspartate. Transports the dicarboxylate into the cell with a probable stoichiometry of 3 Na(+) for 1 divalent dicarboxylate, rendering the process electrogenic. Can transport citrate in a Na(+)-dependent manner, recognizing the divalent form of citrate rather than the trivalent form which is normally found in blood. Imports itaconate in hepatocytes leading to activation of TFEB-dependent lysosomal biogenesis involved in antibacterial innate immune response. The polypeptide is Na(+)/dicarboxylate cotransporter 3 (SLC13A3) (Homo sapiens (Human)).